The sequence spans 682 residues: Homeobox-leucine zipper protein HDG7 (682 aa).

The segment at 33 to 65 is disordered; that stretch reads LSDDSFDAMSGDEDKQEQRPKKKKRKTKYHRHT. Over residues 52-65 the composition is skewed to basic residues; the sequence is PKKKKRKTKYHRHT. The segment at residues 57 to 116 is a DNA-binding region (homeobox); that stretch reads RKTKYHRHTSYQIQELESFFKECPHPNEKQRLELGKKLTLESKQIKFWFQNRRTQMKTQL. A coiled-coil region spans residues 105–186; that stretch reads FQNRRTQMKT…LDRICALANR (82 aa). The 216-residue stretch at 214-429 folds into the START domain; it reads SGGTSLMFMD…LQRQCESFTM (216 aa).

The protein belongs to the HD-ZIP homeobox family. Class IV subfamily. In terms of assembly, interacts with AIL7/PLT7. Expressed in cells around the base of leaf primordia, in the outermost 2 to 3 cell layers along the boundary between two leaf primordia. Expressed in lateral root primordia and tips, and in the epidermal boundaries of two cotyledons at heart-stage embryo.

It localises to the nucleus. Probable transcription factor that binds to the DNA sequence 5'-GCATTAAATGC-3'. Seems to promote cell differentiation. The sequence is that of Homeobox-leucine zipper protein HDG7 from Arabidopsis thaliana (Mouse-ear cress).